Consider the following 366-residue polypeptide: Methylthioribose-1-phosphate isomerase (366 aa).

The Proton donor role is filled by aspartate 260.

It belongs to the eIF-2B alpha/beta/delta subunits family. MtnA subfamily.

It is found in the cytoplasm. The protein resides in the nucleus. It catalyses the reaction 5-(methylsulfanyl)-alpha-D-ribose 1-phosphate = 5-(methylsulfanyl)-D-ribulose 1-phosphate. It functions in the pathway amino-acid biosynthesis; L-methionine biosynthesis via salvage pathway; L-methionine from S-methyl-5-thio-alpha-D-ribose 1-phosphate: step 1/6. Catalyzes the interconversion of methylthioribose-1-phosphate (MTR-1-P) into methylthioribulose-1-phosphate (MTRu-1-P). The protein is Methylthioribose-1-phosphate isomerase of Caenorhabditis elegans.